Consider the following 147-residue polypeptide: Large ribosomal subunit protein bL9 (147 aa).

It belongs to the bacterial ribosomal protein bL9 family.

Functionally, binds to the 23S rRNA. This is Large ribosomal subunit protein bL9 from Trichlorobacter lovleyi (strain ATCC BAA-1151 / DSM 17278 / SZ) (Geobacter lovleyi).